Here is a 295-residue protein sequence, read N- to C-terminus: Secreted frizzled-related protein 2 (295 aa).

Positions 1 to 24 (MPRGPASLLLLVLASHCCLGSARG) are cleaved as a signal peptide. The 121-residue stretch at 35 to 155 (YKRSNCKPIP…PQDNDLCIPL (121 aa)) folds into the FZ domain. 8 disulfide bridges follow: cysteine 40/cysteine 103, cysteine 50/cysteine 96, cysteine 87/cysteine 125, cysteine 114/cysteine 152, cysteine 118/cysteine 142, cysteine 172/cysteine 245, cysteine 175/cysteine 247, and cysteine 190/cysteine 295. The 124-residue stretch at 172 to 295 (CEACKTKNED…ISRSIRKLQC (124 aa)) folds into the NTR domain.

Belongs to the secreted frizzled-related protein (sFRP) family. In terms of tissue distribution, highly expressed in the eye. Weaker expression in heart and lung.

It is found in the secreted. Its function is as follows. Soluble frizzled-related proteins (sFRPS) function as modulators of Wnt signaling through direct interaction with Wnts. They have a role in regulating cell growth and differentiation in specific cell types. SFRP2 may be important for eye retinal development and for myogenesis. The protein is Secreted frizzled-related protein 2 of Mus musculus (Mouse).